The sequence spans 382 residues: Na(+)/H(+) antiporter NhaA (382 aa).

Helical transmembrane passes span phenylalanine 11–alanine 31, phenylalanine 47–isoleucine 67, leucine 88–isoleucine 108, glycine 116–phenylalanine 136, phenylalanine 145–tyrosine 165, histidine 170–leucine 190, isoleucine 261–glycine 283, leucine 299–valine 319, threonine 327–valine 347, and glycine 353–glycine 373.

It belongs to the NhaA Na(+)/H(+) (TC 2.A.33) antiporter family.

It localises to the cell inner membrane. It catalyses the reaction Na(+)(in) + 2 H(+)(out) = Na(+)(out) + 2 H(+)(in). Functionally, na(+)/H(+) antiporter that extrudes sodium in exchange for external protons. The sequence is that of Na(+)/H(+) antiporter NhaA from Geobacter sulfurreducens (strain ATCC 51573 / DSM 12127 / PCA).